Here is a 372-residue protein sequence, read N- to C-terminus: Putative glutamate--cysteine ligase 2 (372 aa).

It belongs to the glutamate--cysteine ligase type 2 family. YbdK subfamily.

The enzyme catalyses L-cysteine + L-glutamate + ATP = gamma-L-glutamyl-L-cysteine + ADP + phosphate + H(+). Its function is as follows. ATP-dependent carboxylate-amine ligase which exhibits weak glutamate--cysteine ligase activity. The polypeptide is Putative glutamate--cysteine ligase 2 (Cupriavidus metallidurans (strain ATCC 43123 / DSM 2839 / NBRC 102507 / CH34) (Ralstonia metallidurans)).